Here is a 1006-residue protein sequence, read N- to C-terminus: DNA polymerase (1006 aa).

This sequence belongs to the DNA polymerase type-B family. Interacts with OPG148. Component of the Uracil-DNA glycosylase(UDG)-OPG148-polymerase complex; OPG148 and OPG116/UDG form a heterodimeric processivity factor that associates with OPG071 to form the processive polymerase holoenzyme.

The catalysed reaction is DNA(n) + a 2'-deoxyribonucleoside 5'-triphosphate = DNA(n+1) + diphosphate. Functionally, catalyzes DNA synthesis. Acquires processivity by associating with a heterodimeric processivity factor comprised of the viral OPG148 and OPG116 proteins, thereby forming the DNA polymerase holoenzyme. Displays 3'- to 5' exonuclease activity. Might participate in viral DNA recombination. Does not perform OPG116/D4synthesis across an abasic site. This Monkeypox virus protein is DNA polymerase (OPG071).